The sequence spans 178 residues: Large ribosomal subunit protein uL6 (178 aa).

The tract at residues Gly-159–Lys-178 is disordered.

It belongs to the universal ribosomal protein uL6 family. Part of the 50S ribosomal subunit.

In terms of biological role, this protein binds to the 23S rRNA, and is important in its secondary structure. It is located near the subunit interface in the base of the L7/L12 stalk, and near the tRNA binding site of the peptidyltransferase center. The polypeptide is Large ribosomal subunit protein uL6 (Listeria monocytogenes serotype 4b (strain CLIP80459)).